Here is a 336-residue protein sequence, read N- to C-terminus: Mitochondrial import receptor subunit TOM40 homolog (336 aa).

The disordered stretch occupies residues 1 to 58; that stretch reads MGNVLAASSPAPPAAGSPPAPGLVSVPPGFTMPPVAGLTPTPDKKETQEDRLPNPGTF. Over residues 10–21 the composition is skewed to pro residues; that stretch reads PAPPAAGSPPAP. A compositionally biased stretch (basic and acidic residues) spans 42–52; that stretch reads PDKKETQEDRL.

It belongs to the Tom40 family. Forms part of the preprotein translocase complex of the outer mitochondrial membrane (TOM complex). Interacts with mitochondrial targeting sequences.

It is found in the mitochondrion outer membrane. Channel-forming protein essential for import of protein precursors into mitochondria. The protein is Mitochondrial import receptor subunit TOM40 homolog (tomm40) of Xenopus tropicalis (Western clawed frog).